The following is a 233-amino-acid chain: tRNA (guanine-N(7)-)-methyltransferase (233 aa).

Glu62, Glu87, Asp116, and Asp138 together coordinate S-adenosyl-L-methionine. The active site involves Asp138. Residues Lys142, Asp174, and 212 to 215 (TRYE) contribute to the substrate site.

The protein belongs to the class I-like SAM-binding methyltransferase superfamily. TrmB family.

The catalysed reaction is guanosine(46) in tRNA + S-adenosyl-L-methionine = N(7)-methylguanosine(46) in tRNA + S-adenosyl-L-homocysteine. The protein operates within tRNA modification; N(7)-methylguanine-tRNA biosynthesis. Its function is as follows. Catalyzes the formation of N(7)-methylguanine at position 46 (m7G46) in tRNA. The protein is tRNA (guanine-N(7)-)-methyltransferase of Bartonella quintana (strain Toulouse) (Rochalimaea quintana).